A 76-amino-acid chain; its full sequence is Omega-conotoxin-like TxO3 (76 aa).

A signal peptide spans 1–22; sequence MKLTCVVIVAVLFLTAWTFVTA. Residues 23 to 52 constitute a propeptide that is removed on maturation; that stretch reads VPHSSNALENLYLKAHHEMNNPEASELNKR. 3 disulfide bridges follow: cysteine 53–cysteine 67, cysteine 60–cysteine 71, and cysteine 66–cysteine 75.

Belongs to the conotoxin O1 superfamily. As to expression, expressed by the venom duct.

It localises to the secreted. In terms of biological role, omega-conotoxins act at presynaptic membranes, they bind and block voltage-gated calcium channels (Cav). The polypeptide is Omega-conotoxin-like TxO3 (TXO3) (Conus textile (Cloth-of-gold cone)).